Consider the following 545-residue polypeptide: Methionine--tRNA ligase (545 aa).

Positions Pro15–His25 match the 'HIGH' region motif. Positions 146, 149, 159, and 162 each coordinate Zn(2+). Residues Lys332–Ser336 carry the 'KMSKS' region motif. Residue Lys335 participates in ATP binding.

This sequence belongs to the class-I aminoacyl-tRNA synthetase family. MetG type 1 subfamily. As to quaternary structure, monomer. Zn(2+) serves as cofactor.

It is found in the cytoplasm. The enzyme catalyses tRNA(Met) + L-methionine + ATP = L-methionyl-tRNA(Met) + AMP + diphosphate. Is required not only for elongation of protein synthesis but also for the initiation of all mRNA translation through initiator tRNA(fMet) aminoacylation. This Hamiltonella defensa subsp. Acyrthosiphon pisum (strain 5AT) protein is Methionine--tRNA ligase.